A 1052-amino-acid polypeptide reads, in one-letter code: Carboxylic acid reductase (1052 aa).

The tract at residues R21 to Y344 is adenylation (A) domain. Residues S334–A335, T339, and Y419–R422 contribute to the AMP site. The 84-residue stretch at S560–V643 folds into the Carrier domain. S595 is modified (O-(pantetheine 4'-phosphoryl)serine). The segment at G684 to L979 is carboxylic acid reductase (R) domain. NADP(+) contacts are provided by residues T693 to I696, R718, N774 to W776, S814, Y844, and K848.

It belongs to the adenylate-forming reductase family. Mg(2+) serves as cofactor.

It carries out the reaction an aromatic aldehyde + AMP + diphosphate + NADP(+) = an aromatic carboxylate + ATP + NADPH + H(+). The enzyme catalyses a carboxylate + ATP + NADPH + H(+) = an aldehyde + AMP + diphosphate + NADP(+). The catalysed reaction is benzoate + ATP + NADPH + H(+) = benzaldehyde + AMP + diphosphate + NADP(+). It catalyses the reaction (E)-cinnamate + ATP + NADPH + H(+) = (E)-cinnamaldehyde + AMP + diphosphate + NADP(+). It carries out the reaction piperonylate + ATP + NADPH + H(+) = piperonal + AMP + diphosphate + NADP(+). The enzyme catalyses salicylate + ATP + NADPH + H(+) = salicylaldehyde + AMP + diphosphate + NADP(+). The catalysed reaction is 3-hydroxybenzoate + ATP + NADPH + H(+) = 3-hydroxybenzaldehyde + AMP + diphosphate + NADP(+). It catalyses the reaction 2-methoxybenzoate + ATP + NADPH + H(+) = 2-methoxybenzaldehyde + AMP + diphosphate + NADP(+). It carries out the reaction 3-methoxybenzoate + ATP + NADPH + H(+) = 3-methoxybenzaldehyde + AMP + diphosphate + NADP(+). The enzyme catalyses 4-hydroxybenzoate + ATP + NADPH + H(+) = 4-hydroxybenzaldehyde + AMP + diphosphate + NADP(+). The catalysed reaction is 4-methoxybenzoate + ATP + NADPH + H(+) = 4-methoxybenzaldehyde + AMP + diphosphate + NADP(+). It catalyses the reaction 3-phenylpropanoate + ATP + NADPH + H(+) = 3-phenylpropanal + AMP + diphosphate + NADP(+). It carries out the reaction picolinate + ATP + NADPH + H(+) = picolinal + AMP + diphosphate + NADP(+). The enzyme catalyses propanoate + ATP + NADPH + H(+) = propanal + AMP + diphosphate + NADP(+). The catalysed reaction is butanoate + ATP + NADPH + H(+) = butanal + AMP + diphosphate + NADP(+). It catalyses the reaction pentanoate + ATP + NADPH + H(+) = pentanal + AMP + diphosphate + NADP(+). It carries out the reaction hexanoate + ATP + NADPH + H(+) = hexanal + AMP + diphosphate + NADP(+). The enzyme catalyses heptanoate + ATP + NADPH + H(+) = heptanal + AMP + diphosphate + NADP(+). The catalysed reaction is octanoate + ATP + NADPH + H(+) = octanal + AMP + diphosphate + NADP(+). It catalyses the reaction nonanoate + ATP + NADPH + H(+) = nonanal + AMP + diphosphate + NADP(+). Carboxylic acid reductase that shows a broad range of substrate specificity towards aromatic acids, especially to phenyl carboxylic and phenyl acrylic acids, to convert them into their respective aldehydes. Also able to use aliphatic acids as substrates. This Neurospora crassa (strain ATCC 24698 / 74-OR23-1A / CBS 708.71 / DSM 1257 / FGSC 987) protein is Carboxylic acid reductase.